The chain runs to 76 residues: Sec-independent protein translocase protein TatA (76 aa).

A helical transmembrane segment spans residues 1 to 21; that stretch reads MGSFSIWHWLIVLLIVVLVFG. Positions 44–76 are disordered; that stretch reads RDGSTAPADPAQQVTANKSADANTVDVEAKQKS. Residues 55–65 are compositionally biased toward polar residues; it reads QQVTANKSADA.

Belongs to the TatA/E family. As to quaternary structure, the Tat system comprises two distinct complexes: a TatABC complex, containing multiple copies of TatA, TatB and TatC subunits, and a separate TatA complex, containing only TatA subunits. Substrates initially bind to the TatABC complex, which probably triggers association of the separate TatA complex to form the active translocon.

It localises to the cell inner membrane. Functionally, part of the twin-arginine translocation (Tat) system that transports large folded proteins containing a characteristic twin-arginine motif in their signal peptide across membranes. TatA could form the protein-conducting channel of the Tat system. The protein is Sec-independent protein translocase protein TatA of Methylibium petroleiphilum (strain ATCC BAA-1232 / LMG 22953 / PM1).